An 81-amino-acid chain; its full sequence is MPKRILQGVVVSDKQEKTIVVKVERRFTHPLLKKTVRRSKNYHAHDETKAFKIGDTVSIEETKPMSKLKRWIVLPAAQAQG.

This sequence belongs to the universal ribosomal protein uS17 family. Part of the 30S ribosomal subunit.

In terms of biological role, one of the primary rRNA binding proteins, it binds specifically to the 5'-end of 16S ribosomal RNA. The protein is Small ribosomal subunit protein uS17 of Methylocella silvestris (strain DSM 15510 / CIP 108128 / LMG 27833 / NCIMB 13906 / BL2).